A 207-amino-acid polypeptide reads, in one-letter code: Protein Nef (207 aa).

Gly2 carries N-myristoyl glycine; by host lipidation. The residue at position 6 (Ser6) is a Phosphoserine; by host. Residues 62-66 (EEEEE) form an acidic; interacts with host PACS1 and PACS2; stabilizes the interaction of NEF/MHC-I with host AP1M1; necessary for MHC-I internalization region. Positions 70–79 (PVRPQVPLRP) are SH3-binding; interaction with Src family tyrosine kinases. The PxxP; stabilizes the interaction of NEF/MHC-I with host AP1M1; necessary for MHC-I internalization signature appears at 73–76 (PQVP). The interval 109–125 (EILDLWVYNTQGFFPDW) is mediates dimerization, Nef-PTE1 interaction. Positions 149–181 (VDPSEVEEINEGENNCLLHPASLHGMEDEDREV) are binding to ATP6V1H. A Dileucine internalization motif; necessary for CD4 internalization motif is present at residues 165-166 (LL). The Diacidic; necessary for CD4 internalization signature appears at 175 to 176 (ED).

The protein belongs to the lentivirus primate group Nef protein family. In terms of assembly, monomer; cytosolic form. Homodimer; membrane bound form. Interacts with Nef associated p21-activated kinase (PAK2); this interaction activates PAK2. Associates with the Nef-MHC-I-AP1 complex; this complex is required for MHC-I internalization. Interacts (via C-terminus) with host PI3-kinase. Interacts with host PACS1; this interaction seems to be weak. Interacts with host PACS2. Interacts with host LCK and MAPK3; these interactions inhibit the kinase activity of the latter. Interacts with host ATP6V1H; this interaction may play a role in CD4 endocytosis. Associates with the CD4-Nef-AP2 complex; this complex is required for CD4 internalization. Interacts with host AP2 subunit alpha and AP2 subunit sigma2. Interacts with TCR-zeta chain; this interaction up-regulates the Fas ligand (FasL) surface expression. Interacts with host HCK, LYN, and SRC; these interactions activate the Src family kinases. Interacts with MAP3K5; this interaction inhibits the Fas and TNFR-mediated death signals. Interacts with beta-COP and PTE1. Interacts with human RACK1; this increases Nef phosphorylation by PKC. Interacts with TP53; this interaction decreases the half-life of TP53, protecting the infected cell against p53-mediated apoptosis. In terms of processing, the virion-associated Nef proteins are cleaved by the viral protease to release the soluble C-terminal core protein. Nef is probably cleaved concomitantly with viral structural proteins on maturation of virus particles. Post-translationally, myristoylated. Phosphorylated on serine residues, probably by host PKCdelta and theta.

It is found in the host cell membrane. The protein resides in the virion. It localises to the secreted. The protein localises to the host Golgi apparatus membrane. Factor of infectivity and pathogenicity, required for optimal virus replication. Alters numerous pathways of T-lymphocyte function and down-regulates immunity surface molecules in order to evade host defense and increase viral infectivity. Alters the functionality of other immunity cells, like dendritic cells, monocytes/macrophages and NK cells. Functionally, in infected CD4(+) T-lymphocytes, down-regulates the surface MHC-I, mature MHC-II, CD4, CD28, CCR5 and CXCR4 molecules. Mediates internalization and degradation of host CD4 through the interaction of with the cytoplasmic tail of CD4, the recruitment of AP-2 (clathrin adapter protein complex 2), internalization through clathrin coated pits, and subsequent transport to endosomes and lysosomes for degradation. Diverts host MHC-I molecules to the trans-Golgi network-associated endosomal compartments by an endocytic pathway to finally target them for degradation. MHC-I down-regulation may involve AP-1 (clathrin adapter protein complex 1) or possibly Src family kinase-ZAP70/Syk-PI3K cascade recruited by PACS2. In consequence infected cells are masked for immune recognition by cytotoxic T-lymphocytes. Decreasing the number of immune receptors also prevents reinfection by more HIV particles (superinfection). Down-regulates host SERINC3 and SERINC5 thereby excluding these proteins from the viral particles. Virion infectivity is drastically higher when SERINC3 or SERINC5 are excluded from the viral envelope, because these host antiviral proteins impair the membrane fusion event necessary for subsequent virion penetration. Its function is as follows. Bypasses host T-cell signaling by inducing a transcriptional program nearly identical to that of anti-CD3 cell activation. Interaction with TCR-zeta chain up-regulates the Fas ligand (FasL). Increasing surface FasL molecules and decreasing surface MHC-I molecules on infected CD4(+) cells send attacking cytotoxic CD8+ T-lymphocytes into apoptosis. In terms of biological role, plays a role in optimizing the host cell environment for viral replication without causing cell death by apoptosis. Protects the infected cells from apoptosis in order to keep them alive until the next virus generation is ready to strike. Inhibits the Fas and TNFR-mediated death signals by blocking MAP3K5/ASK1. Decreases the half-life of TP53, protecting the infected cell against p53-mediated apoptosis. Inhibits the apoptotic signals regulated by the Bcl-2 family proteins through the formation of a Nef/PI3-kinase/PAK2 complex that leads to activation of PAK2 and induces phosphorylation of host BAD. Extracellular Nef protein targets CD4(+) T-lymphocytes for apoptosis by interacting with CXCR4 surface receptors. The chain is Protein Nef from Homo sapiens (Human).